Here is a 185-residue protein sequence, read N- to C-terminus: Homeobox expressed in ES cells 1 (185 aa).

The homeobox DNA-binding region spans 108–167; sequence GRRPRTAFTQNQIEVLENVFRVNCYPGIDIREDLAQKLNLEEDRIQIWFQNRRAKLKRSH.

It belongs to the ANF homeobox family. In terms of assembly, can form heterodimers with PROP1 in binding to DNA. Interacts with TLE1.

Its subcellular location is the nucleus. Functionally, required for the normal development of the forebrain, eyes and other anterior structures such as the olfactory placodes and pituitary gland. Possible transcriptional repressor. Binds to the palindromic PIII sequence, 5'-AGCTTGAGTCTAATTGAATTAACTGTAC-3'. HESX1 and PROP1 bind as heterodimers on this palindromic site, and, in vitro, HESX1 can antagonize PROP1 activation. The chain is Homeobox expressed in ES cells 1 (HESX1) from Pan troglodytes (Chimpanzee).